The sequence spans 156 residues: E3 ubiquitin-protein ligase LAP (156 aa).

An RING-CH-type zinc finger spans residues 1 to 55; sequence MSDICWICNDVCDERNNFCGCNEEYKVVHIKCMQLWINYSKKKECNLCKTKYNIK. Over 1 to 73 the chain is Cytoplasmic; that stretch reads MSDICWICND…WNWCFNDKKT (73 aa). Zn(2+)-binding residues include C5, C8, C19, C21, H29, C32, C45, and C48. Residues 74–94 form a helical membrane-spanning segment; the sequence is TLFKIFFILFALVFIFLTITL. Topologically, residues 95–111 are lumenal; it reads SNDMANLVTGINDLICS. The helical transmembrane segment at 112–132 threads the bilayer; that stretch reads IIFLIVYTVVMLTSICFSVFV. Topologically, residues 133-156 are cytoplasmic; sequence VAIVVDFLLEAKEKNSFLTIREIV.

This sequence belongs to the poxviridae LAP protein family.

It is found in the host membrane. The protein resides in the host Golgi apparatus. The protein localises to the host trans-Golgi network membrane. It localises to the host early endosome membrane. It carries out the reaction S-ubiquitinyl-[E2 ubiquitin-conjugating enzyme]-L-cysteine + [acceptor protein]-L-lysine = [E2 ubiquitin-conjugating enzyme]-L-cysteine + N(6)-ubiquitinyl-[acceptor protein]-L-lysine.. Functionally, E3 ubiquitin-protein ligase which promotes ubiquitination and subsequent degradation of host MHC-I and CD4 molecules, presumably to prevent lysis of infected cells by cytotoxic T-lymphocytes and NK cell. Binds target molecules through transmembrane interaction. The result of this ubiquitination is the enhancement of the endocytosis of the target chain and the delivery to the lysosome, where it is proteolytically destroyed. This Yaba-like disease virus (YLDV) protein is E3 ubiquitin-protein ligase LAP.